The primary structure comprises 570 residues: Sulfite reductase [NADPH] hemoprotein beta-component (570 aa).

Cysteine 434, cysteine 440, cysteine 479, and cysteine 483 together coordinate [4Fe-4S] cluster. Cysteine 483 is a binding site for siroheme.

The protein belongs to the nitrite and sulfite reductase 4Fe-4S domain family. In terms of assembly, alpha(8)-beta(8). The alpha component is a flavoprotein, the beta component is a hemoprotein. It depends on siroheme as a cofactor. Requires [4Fe-4S] cluster as cofactor.

It carries out the reaction hydrogen sulfide + 3 NADP(+) + 3 H2O = sulfite + 3 NADPH + 4 H(+). Its pathway is sulfur metabolism; hydrogen sulfide biosynthesis; hydrogen sulfide from sulfite (NADPH route): step 1/1. Its function is as follows. Component of the sulfite reductase complex that catalyzes the 6-electron reduction of sulfite to sulfide. This is one of several activities required for the biosynthesis of L-cysteine from sulfate. This chain is Sulfite reductase [NADPH] hemoprotein beta-component, found in Klebsiella pneumoniae subsp. pneumoniae (strain ATCC 700721 / MGH 78578).